Consider the following 256-residue polypeptide: Probable histidine-binding protein (256 aa).

The N-terminal stretch at 1-19 (MKKFLTAFLVAFTGLFLVA) is a signal peptide. C20 carries N-palmitoyl cysteine lipidation. A lipid anchor (S-diacylglycerol cysteine) is attached at C20.

Belongs to the bacterial solute-binding protein 3 family.

The protein localises to the cell membrane. In terms of biological role, involved in histidine transport. The polypeptide is Probable histidine-binding protein (hisJ) (Campylobacter jejuni subsp. jejuni serotype O:2 (strain ATCC 700819 / NCTC 11168)).